Consider the following 596-residue polypeptide: Elongation factor 4 (596 aa).

In terms of domain architecture, tr-type G spans Lys-2–Val-184. GTP is bound by residues Asp-14–Thr-19 and Asn-131–Asp-134.

It belongs to the TRAFAC class translation factor GTPase superfamily. Classic translation factor GTPase family. LepA subfamily.

Its subcellular location is the cell inner membrane. It catalyses the reaction GTP + H2O = GDP + phosphate + H(+). Functionally, required for accurate and efficient protein synthesis under certain stress conditions. May act as a fidelity factor of the translation reaction, by catalyzing a one-codon backward translocation of tRNAs on improperly translocated ribosomes. Back-translocation proceeds from a post-translocation (POST) complex to a pre-translocation (PRE) complex, thus giving elongation factor G a second chance to translocate the tRNAs correctly. Binds to ribosomes in a GTP-dependent manner. The sequence is that of Elongation factor 4 from Shewanella denitrificans (strain OS217 / ATCC BAA-1090 / DSM 15013).